A 1704-amino-acid chain; its full sequence is Phospholipid-transporting ATPase ABCA3 (1704 aa).

Asn14 carries an N-linked (GlcNAc...) asparagine glycan. A helical membrane pass occupies residues 22–42; it reads VLVTVLELFLPLLFSGILIWL. N-linked (GlcNAc...) asparagine glycans are attached at residues Asn53, Asn124, Asn140, and Asn228. 5 consecutive transmembrane segments (helical) span residues 251–271, 307–327, 344–364, 373–393, and 405–425; these read ISDP…MLSF, AWFL…TLLF, SLVL…SFMV, MAAT…FFVA, and LLSC…IGKF. The ABC transporter 1 domain occupies 530 to 763; sequence IKIKHLSKVF…YGAGYHMTLV (234 aa). 566–573 is a binding site for ATP; that stretch reads GHNGAGKT. N-linked (GlcNAc...) asparagine glycans are attached at residues Asn620 and Asn945. The next 6 helical transmembrane spans lie at 1100-1120, 1144-1164, 1183-1203, 1213-1233, 1245-1265, and 1310-1330; these read IALN…ILAV, SALL…LVVF, LLLM…SFFF, LTIF…IMRI, LDHV…SNFY, and MAAS…NLLW. The N-linked (GlcNAc...) asparagine glycan is linked to Asn1350. The region spanning 1381-1614 is the ABC transporter 2 domain; it reads LIINELSKVY…FGSGYSLQAK (234 aa). Residue 1416–1423 coordinates ATP; it reads GFNGAGKT.

Homooligomer; disulfide-linked. Post-translationally, N-glycosylated. Localization at intracellular vesicles is accompanied by processing of oligosaccharide from high mannose type to complex type. N-linked glycosylation at Asn-124 and Asn-140 is required for stability and efficient anterograde trafficking and prevents from proteasomal degradation. Proteolytically cleaved by CTSL and to a lower extent by CTSB within multivesicular bodies (MVB) and lamellar bodies (LB) leading to a mature form of 150 kDa. As to expression, highly expressed in lung, moderately expressed in stomach, intestine, and kidney and weakly expressed in thyroid, brain, liver, spleen, heart, testis, and thymus.

It is found in the endosome. The protein resides in the multivesicular body membrane. Its subcellular location is the cytoplasmic vesicle membrane. It localises to the late endosome membrane. The protein localises to the lysosome membrane. It carries out the reaction ATP + H2O + xenobioticSide 1 = ADP + phosphate + xenobioticSide 2.. It catalyses the reaction a 1,2-diacyl-sn-glycero-3-phosphocholine(in) + ATP + H2O = a 1,2-diacyl-sn-glycero-3-phosphocholine(out) + ADP + phosphate + H(+). The enzyme catalyses ATP + H2O + phospholipidSide 1 = ADP + phosphate + phospholipidSide 2.. The catalysed reaction is 1,2-dihexadecanoyl-sn-glycero-3-phosphocholine(in) + ATP + H2O = 1,2-dihexadecanoyl-sn-glycero-3-phosphocholine(out) + ADP + phosphate + H(+). It carries out the reaction cholesterol(in) + ATP + H2O = cholesterol(out) + ADP + phosphate + H(+). It catalyses the reaction a 1,2-diacyl-sn-glycero-3-phospho-(1'-sn-glycerol)(in) + ATP + H2O = a 1,2-diacyl-sn-glycero-3-phospho-(1'-sn-glycerol)(out) + ADP + phosphate + H(+). Catalyzes the ATP-dependent transport of phospholipids such as phosphatidylcholine and phosphoglycerol from the cytoplasm into the lumen side of lamellar bodies, in turn participates in the lamellar bodies biogenesis and homeostasis of pulmonary surfactant. Transports preferentially phosphatidylcholine containing short acyl chains. In addition plays a role as an efflux transporter of miltefosine across macrophage membranes and free cholesterol (FC) through intralumenal vesicles by removing FC from the cell as a component of surfactant and protects cells from free cholesterol toxicity. The protein is Phospholipid-transporting ATPase ABCA3 of Rattus norvegicus (Rat).